Consider the following 89-residue polypeptide: Small ribosomal subunit protein uS15 (89 aa).

This sequence belongs to the universal ribosomal protein uS15 family. In terms of assembly, part of the 30S ribosomal subunit. Forms a bridge to the 50S subunit in the 70S ribosome, contacting the 23S rRNA.

In terms of biological role, one of the primary rRNA binding proteins, it binds directly to 16S rRNA where it helps nucleate assembly of the platform of the 30S subunit by binding and bridging several RNA helices of the 16S rRNA. Its function is as follows. Forms an intersubunit bridge (bridge B4) with the 23S rRNA of the 50S subunit in the ribosome. The chain is Small ribosomal subunit protein uS15 from Streptococcus mutans serotype c (strain ATCC 700610 / UA159).